A 263-amino-acid polypeptide reads, in one-letter code: UPF0739 protein C1orf74 homolog (263 aa).

The protein belongs to the UPF0739 family.

In Rattus norvegicus (Rat), this protein is UPF0739 protein C1orf74 homolog.